The primary structure comprises 151 residues: Large ribosomal subunit protein uL15 (151 aa).

The protein belongs to the universal ribosomal protein uL15 family. Part of the 50S ribosomal subunit.

Functionally, binds to the 23S rRNA. This chain is Large ribosomal subunit protein uL15, found in Hyperthermus butylicus (strain DSM 5456 / JCM 9403 / PLM1-5).